The following is a 430-amino-acid chain: 3-phosphoshikimate 1-carboxyvinyltransferase (430 aa).

3-phosphoshikimate-binding residues include lysine 20, serine 21, and arginine 25. Lysine 20 provides a ligand contact to phosphoenolpyruvate. Phosphoenolpyruvate is bound by residues glycine 90 and arginine 118. Positions 163, 164, 165, 191, 311, and 338 each coordinate 3-phosphoshikimate. Phosphoenolpyruvate is bound at residue glutamine 165. Aspartate 311 (proton acceptor) is an active-site residue. Positions 342 and 383 each coordinate phosphoenolpyruvate.

Belongs to the EPSP synthase family. In terms of assembly, monomer.

The protein resides in the cytoplasm. It carries out the reaction 3-phosphoshikimate + phosphoenolpyruvate = 5-O-(1-carboxyvinyl)-3-phosphoshikimate + phosphate. It participates in metabolic intermediate biosynthesis; chorismate biosynthesis. Its function is as follows. Catalyzes the transfer of the enolpyruvyl moiety of phosphoenolpyruvate (PEP) to the 5-hydroxyl of shikimate-3-phosphate (S3P) to produce enolpyruvyl shikimate-3-phosphate and inorganic phosphate. The protein is 3-phosphoshikimate 1-carboxyvinyltransferase of Methanosarcina acetivorans (strain ATCC 35395 / DSM 2834 / JCM 12185 / C2A).